The following is a 465-amino-acid chain: Na(+)-translocating NADH-quinone reductase subunit A (465 aa).

It belongs to the NqrA family. In terms of assembly, composed of six subunits; NqrA, NqrB, NqrC, NqrD, NqrE and NqrF.

The catalysed reaction is a ubiquinone + n Na(+)(in) + NADH + H(+) = a ubiquinol + n Na(+)(out) + NAD(+). NQR complex catalyzes the reduction of ubiquinone-1 to ubiquinol by two successive reactions, coupled with the transport of Na(+) ions from the cytoplasm to the periplasm. NqrA to NqrE are probably involved in the second step, the conversion of ubisemiquinone to ubiquinol. The polypeptide is Na(+)-translocating NADH-quinone reductase subunit A (Chlamydia trachomatis serovar L2b (strain UCH-1/proctitis)).